The chain runs to 136 residues: Large ribosomal subunit protein uL16 (136 aa).

The protein belongs to the universal ribosomal protein uL16 family. As to quaternary structure, part of the 50S ribosomal subunit.

Functionally, binds 23S rRNA and is also seen to make contacts with the A and possibly P site tRNAs. In Rickettsia rickettsii (strain Iowa), this protein is Large ribosomal subunit protein uL16.